The sequence spans 439 residues: Rho GTPase-activating protein 1 (439 aa).

M1 carries the post-translational modification N-acetylmethionine. The segment covering 28 to 48 (IDEKNWPSDEMPDFPKSDDSK) has biased composition (basic and acidic residues). The segment at 28 to 52 (IDEKNWPSDEMPDFPKSDDSKSSSP) is disordered. Phosphoserine is present on residues S44, S47, S50, and S51. The 156-residue stretch at 63-218 (PYYDIARHQI…QVLKYDDFLK (156 aa)) folds into the CRAL-TRIO domain. Y65 bears the Phosphotyrosine mark. An N6-acetyllysine modification is found at K80. The SH3-binding signature appears at 228–238 (PKPMPPRPPLP). Residues 244–431 (VSLQHLQEKN…FLLDHQGELF (188 aa)) enclose the Rho-GAP domain.

In terms of assembly, found in a complex with XPO7, EIF4A1, ARHGAP1, VPS26A, VPS29, VPS35 and SFN. Interacts with BNIPL. In terms of tissue distribution, ubiquitous.

It is found in the cytoplasm. GTPase activator for the Rho, Rac and Cdc42 proteins, converting them to the putatively inactive GDP-bound state. Cdc42 seems to be the preferred substrate. This Homo sapiens (Human) protein is Rho GTPase-activating protein 1 (ARHGAP1).